We begin with the raw amino-acid sequence, 188 residues long: MSSGHLFQWHLCDVFKSAMCCISCTHTLSLLLCVLTLTSAATGAGPETLCGAELVDTLQFVCGERGFYFSKPTGYGPSSRRSHNRGIVDECCFQSCELRRLEMYCAPVKSGKAARSVRAQRHTDMPRTPKVSTAVQNVDRGTERRTAQHPDKTKPKKKPLSGNSHTSCKEVHQKNSSRGNTGGRNYRM.

The b stretch occupies residues glycine 45–threonine 73. Disulfide bonds link cysteine 50–cysteine 92, cysteine 62–cysteine 105, and cysteine 91–cysteine 96. Residues glycine 74–arginine 85 are c. The interval glycine 86–alanine 106 is a. Residues proline 107–alanine 114 form a d region. Positions arginine 115–methionine 188 are cleaved as a propeptide — e peptide. The disordered stretch occupies residues arginine 115–methionine 188. Residues arginine 140 to threonine 153 are compositionally biased toward basic and acidic residues.

This sequence belongs to the insulin family. As to expression, all the isoforms are expressed in embryos, juvenile and adult liver, muscle and brain. At least one isoform is expressed in heart, kidney, testes, ovary, adipose tissue and spleen of juvenile salmon.

Its subcellular location is the secreted. The insulin-like growth factors, isolated from plasma, are structurally and functionally related to insulin but have a much higher growth-promoting activity. Acts as a ligand for IGF1R. Binds to the alpha subunit of IGF1R, leading to the activation of the intrinsic tyrosine kinase activity which autophosphorylates tyrosine residues in the beta subunit thus initiatiating a cascade of down-stream signaling events leading to activation of the PI3K-AKT/PKB and the Ras-MAPK pathways. Binds to integrins. Its binding to integrins and subsequent ternary complex formation with integrins and IGFR1 are essential for IGF1 signaling. This chain is Insulin-like growth factor 1, found in Oncorhynchus kisutch (Coho salmon).